A 67-amino-acid chain; its full sequence is uncharacterized protein (67 aa).

A coiled-coil region spans residues Ala17 to Gln47.

This is an uncharacterized protein from Bacillus subtilis (strain 168).